Here is a 150-residue protein sequence, read N- to C-terminus: UPF0178 protein ASA_3749 (150 aa).

This sequence belongs to the UPF0178 family.

This chain is UPF0178 protein ASA_3749, found in Aeromonas salmonicida (strain A449).